A 393-amino-acid polypeptide reads, in one-letter code: NAD(P)H-quinone oxidoreductase subunit H, chloroplastic (393 aa).

Belongs to the complex I 49 kDa subunit family. NDH is composed of at least 16 different subunits, 5 of which are encoded in the nucleus.

The protein localises to the plastid. It is found in the chloroplast thylakoid membrane. The catalysed reaction is a plastoquinone + NADH + (n+1) H(+)(in) = a plastoquinol + NAD(+) + n H(+)(out). It catalyses the reaction a plastoquinone + NADPH + (n+1) H(+)(in) = a plastoquinol + NADP(+) + n H(+)(out). Functionally, NDH shuttles electrons from NAD(P)H:plastoquinone, via FMN and iron-sulfur (Fe-S) centers, to quinones in the photosynthetic chain and possibly in a chloroplast respiratory chain. The immediate electron acceptor for the enzyme in this species is believed to be plastoquinone. Couples the redox reaction to proton translocation, and thus conserves the redox energy in a proton gradient. This is NAD(P)H-quinone oxidoreductase subunit H, chloroplastic from Carica papaya (Papaya).